Consider the following 437-residue polypeptide: Methylenetetrahydrofolate--tRNA-(uracil-5-)-methyltransferase TrmFO (437 aa).

10–15 is an FAD binding site; the sequence is GAGLAG.

Belongs to the MnmG family. TrmFO subfamily. The cofactor is FAD.

It localises to the cytoplasm. The enzyme catalyses uridine(54) in tRNA + (6R)-5,10-methylene-5,6,7,8-tetrahydrofolate + NADH + H(+) = 5-methyluridine(54) in tRNA + (6S)-5,6,7,8-tetrahydrofolate + NAD(+). It catalyses the reaction uridine(54) in tRNA + (6R)-5,10-methylene-5,6,7,8-tetrahydrofolate + NADPH + H(+) = 5-methyluridine(54) in tRNA + (6S)-5,6,7,8-tetrahydrofolate + NADP(+). Its function is as follows. Catalyzes the folate-dependent formation of 5-methyl-uridine at position 54 (M-5-U54) in all tRNAs. The protein is Methylenetetrahydrofolate--tRNA-(uracil-5-)-methyltransferase TrmFO of Brevibacillus brevis (strain 47 / JCM 6285 / NBRC 100599).